Reading from the N-terminus, the 501-residue chain is Ribose import ATP-binding protein RbsA (501 aa).

2 consecutive ABC transporter domains span residues 5 to 241 (LELK…VGRK) and 249 to 495 (LNLP…VGKQ). Position 37-44 (37-44 (GENGAGKS)) interacts with ATP.

This sequence belongs to the ABC transporter superfamily. Ribose importer (TC 3.A.1.2.1) family. The complex is composed of an ATP-binding protein (RbsA), two transmembrane proteins (RbsC) and a solute-binding protein (RbsB).

It localises to the cell inner membrane. It catalyses the reaction D-ribose(out) + ATP + H2O = D-ribose(in) + ADP + phosphate + H(+). In terms of biological role, part of the ABC transporter complex RbsABC involved in ribose import. Responsible for energy coupling to the transport system. This chain is Ribose import ATP-binding protein RbsA, found in Photorhabdus laumondii subsp. laumondii (strain DSM 15139 / CIP 105565 / TT01) (Photorhabdus luminescens subsp. laumondii).